Reading from the N-terminus, the 146-residue chain is Putative phosphotransferase enzyme IIA component YadI (146 aa).

A PTS EIIA type-4 domain is found at 1–124; it reads MLGWVITCHD…RIVELGAPEV (124 aa). Residue histidine 9 is the Tele-phosphohistidine intermediate of the active site.

It is found in the cytoplasm. In terms of biological role, the phosphoenolpyruvate-dependent sugar phosphotransferase system (sugar PTS), a major carbohydrate active -transport system, catalyzes the phosphorylation of incoming sugar substrates concomitantly with their translocation across the cell membrane. The protein is Putative phosphotransferase enzyme IIA component YadI (yadI) of Escherichia coli (strain K12).